Reading from the N-terminus, the 275-residue chain is Large ribosomal subunit protein uL2 (275 aa).

A disordered region spans residues 210–275; the sequence is GRNRHRGIRP…DKLIISRKKK (66 aa). Over residues 257-275 the composition is skewed to basic residues; the sequence is FKTRKKKASDKLIISRKKK.

The protein belongs to the universal ribosomal protein uL2 family. Part of the 50S ribosomal subunit. Forms a bridge to the 30S subunit in the 70S ribosome.

Functionally, one of the primary rRNA binding proteins. Required for association of the 30S and 50S subunits to form the 70S ribosome, for tRNA binding and peptide bond formation. It has been suggested to have peptidyltransferase activity; this is somewhat controversial. Makes several contacts with the 16S rRNA in the 70S ribosome. This is Large ribosomal subunit protein uL2 from Helicobacter hepaticus (strain ATCC 51449 / 3B1).